The sequence spans 352 residues: Ion-translocating oxidoreductase complex subunit D (352 aa).

The next 5 membrane-spanning stretches (helical) occupy residues 20-40 (IMLLVLLAAIPGIATQLWFFG), 42-62 (GTLVQIILAVISALSAEALVL), 68-88 (PIAAILKDNSALLTGLLLAVS), 89-109 (IPPLAPWWMVVLGTVFAVIIA), and 123-143 (PAMIGYVVLLISFPVQMTNWL). Position 187 is an FMN phosphoryl threonine (T187). The next 5 membrane-spanning stretches (helical) occupy residues 217 to 237 (GAGWQWVNLAWLAGGVWLLAI), 244 to 264 (IPVSFLVSLALCATLGWLFAP), 267 to 287 (LASPQIHMLSGATMLGAFFIL), 301 to 321 (LIFGALAGVLVWLIRSFGGYP), and 322 to 342 (DGVAFAVLLANITVPLIDYYT).

The protein belongs to the NqrB/RnfD family. In terms of assembly, the complex is composed of six subunits: RsxA, RsxB, RsxC, RsxD, RsxE and RsxG. FMN serves as cofactor.

It is found in the cell inner membrane. Functionally, part of a membrane-bound complex that couples electron transfer with translocation of ions across the membrane. Required to maintain the reduced state of SoxR. The polypeptide is Ion-translocating oxidoreductase complex subunit D (Escherichia fergusonii (strain ATCC 35469 / DSM 13698 / CCUG 18766 / IAM 14443 / JCM 21226 / LMG 7866 / NBRC 102419 / NCTC 12128 / CDC 0568-73)).